We begin with the raw amino-acid sequence, 68 residues long: Purkinje cell protein 4-like protein 1 (68 aa).

Polar residues predominate over residues 1 to 16 (MSELNTKTSPATNQAA). The disordered stretch occupies residues 1 to 45 (MSELNTKTSPATNQAAGQEEKGKAGNVKKAEEEEEIDIDLTAPET). Thr-8 carries the post-translational modification Phosphothreonine. Basic and acidic residues predominate over residues 18-31 (QEEKGKAGNVKKAE). The region spanning 45 to 68 (TEKAALAIQGKFRRFQKRKKDPSS) is the IQ domain.

The protein belongs to the PCP4 family.

The polypeptide is Purkinje cell protein 4-like protein 1 (PCP4L1) (Homo sapiens (Human)).